The following is a 180-amino-acid chain: Ribosome maturation factor RimM (180 aa).

Residues 103-176 (GDIWWDRDLV…RIVVDPPPGL (74 aa)) form the PRC barrel domain.

It belongs to the RimM family. In terms of assembly, binds ribosomal protein uS19.

The protein localises to the cytoplasm. Its function is as follows. An accessory protein needed during the final step in the assembly of 30S ribosomal subunit, possibly for assembly of the head region. Essential for efficient processing of 16S rRNA. May be needed both before and after RbfA during the maturation of 16S rRNA. It has affinity for free ribosomal 30S subunits but not for 70S ribosomes. The sequence is that of Ribosome maturation factor RimM from Frankia alni (strain DSM 45986 / CECT 9034 / ACN14a).